Consider the following 189-residue polypeptide: GTP cyclohydrolase 1 (189 aa).

The Zn(2+) site is built by Cys-78, His-81, and Cys-150.

Belongs to the GTP cyclohydrolase I family. Homomer.

It catalyses the reaction GTP + H2O = 7,8-dihydroneopterin 3'-triphosphate + formate + H(+). It functions in the pathway cofactor biosynthesis; 7,8-dihydroneopterin triphosphate biosynthesis; 7,8-dihydroneopterin triphosphate from GTP: step 1/1. The polypeptide is GTP cyclohydrolase 1 (Bacillus mycoides (strain KBAB4) (Bacillus weihenstephanensis)).